The chain runs to 215 residues: Pyrrolidone-carboxylate peptidase (215 aa).

Active-site residues include glutamate 78, cysteine 141, and histidine 165.

It belongs to the peptidase C15 family. Homotetramer.

The protein resides in the cytoplasm. It catalyses the reaction Release of an N-terminal pyroglutamyl group from a polypeptide, the second amino acid generally not being Pro.. In terms of biological role, removes 5-oxoproline from various penultimate amino acid residues except L-proline. This chain is Pyrrolidone-carboxylate peptidase, found in Lacticaseibacillus paracasei (strain ATCC 334 / BCRC 17002 / CCUG 31169 / CIP 107868 / KCTC 3260 / NRRL B-441) (Lactobacillus paracasei).